The chain runs to 832 residues: Thymine dioxygenase JBP1-A (832 aa).

Basic and acidic residues predominate over residues 1-12 (MKQKRGKQDVKM). A disordered region spans residues 1–24 (MKQKRGKQDVKMLESAPPQLLPKK). The thymine dioxygenase stretch occupies residues 80–282 (VVGGVFLPGA…RLTCVCYYRA (203 aa)). Residues His207, Asp209, and His257 each coordinate Fe cation. 2-oxoglutarate is bound at residue Arg273. Positions 409-578 (LGGALKAAEE…IEEARRRGSS (170 aa)) are DNA-binding JBP1 domain.

It belongs to the TET family. JBP1 subfamily. As to quaternary structure, monomer. Binds to DNA as a monomer. Requires Fe(2+) as cofactor.

It is found in the nucleus. It carries out the reaction thymine + 2-oxoglutarate + O2 = 5-hydroxymethyluracil + succinate + CO2. Its function is as follows. Dioxygenase that catalyzes the first step of DNA base J (beta-d-glucosyl-HOMedU) biosynthesis by converting thymine to 5-hydroxymethyluracil (HOMedU). DNA base J is a hypermodified thymidine residue found in the genome of kinetoplastid parasites, which is localized primarily to repetitive DNA, namely the telomeres, and is implicated in the regulation of antigenic variation. Also specifically binds to base J-containing DNA (J-DNA). Involved in propagation and maintenance of DNA base J synthesis initiated by JBP2 by specifically binding already synthesized DNA base J and propagating J synthesis. Thymine dioxygenase activity and J-DNA-binding are independent functions. This Trypanosoma cruzi (strain CL Brener) protein is Thymine dioxygenase JBP1-A (JBP1A).